The primary structure comprises 332 residues: MQTGSTPHDDRAGVSANGILGAQARGASGRLLPEIWMQDGAKRVEEALARLLCAEDDGETELMAAMRYATLHGGKRTRALLCLAAGALADTPAHMLDDVGAAIEMMHACTLVHDDLPAMDDDVLRRGLPTVHVKFGEATAILVGDALQAHAFLTLASLNAPGDSPIALVRELAQAVSAEGAAGGQAIDLSLVGKHVELDRIVAMHRMKSGALVRASVRMGALCAVGVNAAHAALYCALDHYSACFGLALQVIDDILDVTADTAALGKTPGKDAAAQKPTCASIMGLQEARQFALDLLRDAGEAIAPLGPRAERLAQLIQRANAYLFKHAPRA.

Isopentenyl diphosphate is bound by residues K75, R78, and H107. 2 residues coordinate Mg(2+): D114 and D120. R125 contacts (2E)-geranyl diphosphate. R126 lines the isopentenyl diphosphate pocket. (2E)-geranyl diphosphate contacts are provided by K208, S209, Q250, and K267.

It belongs to the FPP/GGPP synthase family. Mg(2+) serves as cofactor.

The protein localises to the cytoplasm. It catalyses the reaction isopentenyl diphosphate + (2E)-geranyl diphosphate = (2E,6E)-farnesyl diphosphate + diphosphate. This Bradyrhizobium diazoefficiens (strain JCM 10833 / BCRC 13528 / IAM 13628 / NBRC 14792 / USDA 110) protein is Probable farnesyl diphosphate synthase (fppS).